The chain runs to 450 residues: Mitochondrial distribution and morphology protein 10 (450 aa).

Belongs to the MDM10 family. In terms of assembly, component of the ER-mitochondria encounter structure (ERMES) or MDM complex, composed of MMM1, MDM10, MDM12 and MDM34. Associates with the mitochondrial outer membrane sorting assembly machinery SAM(core) complex.

Its subcellular location is the mitochondrion outer membrane. Its function is as follows. Component of the ERMES/MDM complex, which serves as a molecular tether to connect the endoplasmic reticulum and mitochondria. Components of this complex are involved in the control of mitochondrial shape and protein biogenesis and may function in phospholipid exchange. MDM10 is involved in the late assembly steps of the general translocase of the mitochondrial outer membrane (TOM complex). Functions in the TOM40-specific route of the assembly of outer membrane beta-barrel proteins, including the association of TOM40 with the receptor TOM22 and small TOM proteins. Can associate with the SAM(core) complex as well as the MDM12-MMM1 complex, both involved in late steps of the major beta-barrel assembly pathway, that is responsible for biogenesis of all outer membrane beta-barrel proteins. May act as a switch that shuttles between both complexes and channels precursor proteins into the TOM40-specific pathway. Plays a role in mitochondrial morphology and in the inheritance of mitochondria. This Paracoccidioides lutzii (strain ATCC MYA-826 / Pb01) (Paracoccidioides brasiliensis) protein is Mitochondrial distribution and morphology protein 10.